The sequence spans 528 residues: NAC domain-containing protein 13 (528 aa).

In terms of domain architecture, NAC spans 10–160; it reads LAPGFRFHPT…AYVLYKIYKK (151 aa). The DNA-binding element occupies 107 to 166; that stretch reads VGEKKTLVFHRGRAPNGERTNWVMHEYTLHKEELKRCGGEDVKDAYVLYKIYKKSGSGPK. The disordered stretch occupies residues 388–419; it reads EAPGTGDSSEFLNPVPSGISTTNEDDPSKDES. The helical transmembrane segment at 499–519 threads the bilayer; sequence FFCLSIIGALCALFWVIIGTM.

As to quaternary structure, interacts with RCD1. In terms of tissue distribution, expressed in roots, rosette leaves, shoot apex, stems and flowers.

The protein resides in the endoplasmic reticulum membrane. It is found in the nucleus. Its function is as follows. Transcriptional activator activated by proteolytic cleavage through regulated intramembrane proteolysis (RIP). Involved in oxidative stress tolerance by mediating regulation of mitochondrial retrograde signaling during mitochondrial dysfunction. Interacts directly with the mitochondrial dysfunction DNA consensus motif 5'-CTTGNNNNNCA[AC]G-3', a cis-regulatory elements of several mitochondrial retrograde regulation-induced genes, and triggers increased oxidative stress tolerance. The sequence is that of NAC domain-containing protein 13 from Arabidopsis thaliana (Mouse-ear cress).